Reading from the N-terminus, the 126-residue chain is uncharacterized protein (126 aa).

This is an uncharacterized protein from Escherichia coli (strain K12).